We begin with the raw amino-acid sequence, 387 residues long: Succinyl-diaminopimelate desuccinylase (387 aa).

Position 74 (His74) interacts with Zn(2+). Residue Asp76 is part of the active site. Asp107 is a Zn(2+) binding site. Glu142 functions as the Proton acceptor in the catalytic mechanism. Zn(2+) is bound by residues Glu143, Glu171, and His360.

This sequence belongs to the peptidase M20A family. DapE subfamily. In terms of assembly, homodimer. Requires Zn(2+) as cofactor. Co(2+) serves as cofactor.

The enzyme catalyses N-succinyl-(2S,6S)-2,6-diaminopimelate + H2O = (2S,6S)-2,6-diaminopimelate + succinate. It functions in the pathway amino-acid biosynthesis; L-lysine biosynthesis via DAP pathway; LL-2,6-diaminopimelate from (S)-tetrahydrodipicolinate (succinylase route): step 3/3. In terms of biological role, catalyzes the hydrolysis of N-succinyl-L,L-diaminopimelic acid (SDAP), forming succinate and LL-2,6-diaminopimelate (DAP), an intermediate involved in the bacterial biosynthesis of lysine and meso-diaminopimelic acid, an essential component of bacterial cell walls. The chain is Succinyl-diaminopimelate desuccinylase from Rhodopseudomonas palustris (strain TIE-1).